Reading from the N-terminus, the 281-residue chain is Probable endonuclease 4 (281 aa).

Zn(2+) contacts are provided by histidine 69, histidine 109, glutamate 145, aspartate 179, histidine 182, histidine 216, aspartate 229, histidine 231, and glutamate 261.

The protein belongs to the AP endonuclease 2 family. Requires Zn(2+) as cofactor.

The enzyme catalyses Endonucleolytic cleavage to 5'-phosphooligonucleotide end-products.. Its function is as follows. Endonuclease IV plays a role in DNA repair. It cleaves phosphodiester bonds at apurinic or apyrimidinic (AP) sites, generating a 3'-hydroxyl group and a 5'-terminal sugar phosphate. The chain is Probable endonuclease 4 from Yersinia enterocolitica serotype O:8 / biotype 1B (strain NCTC 13174 / 8081).